The following is a 253-amino-acid chain: Small ribosomal subunit protein uS3 (253 aa).

In terms of domain architecture, KH type-2 spans 21 to 92 (LNEFLTRELA…SVELYAEKVA (72 aa)). The interval 211-253 (VEPKDEILPTTPISEQKGGKPDPQVPQQPPQQPPAMPPPVPTA) is disordered. A compositionally biased stretch (pro residues) spans 233–253 (PQVPQQPPQQPPAMPPPVPTA).

The protein belongs to the universal ribosomal protein uS3 family.

It localises to the cytoplasm. It is found in the nucleus. Its subcellular location is the nucleolus. The protein resides in the mitochondrion inner membrane. The protein localises to the cytoskeleton. It localises to the spindle. It carries out the reaction 2'-deoxyribonucleotide-(2'-deoxyribose 5'-phosphate)-2'-deoxyribonucleotide-DNA = a 3'-end 2'-deoxyribonucleotide-(2,3-dehydro-2,3-deoxyribose 5'-phosphate)-DNA + a 5'-end 5'-phospho-2'-deoxyribonucleoside-DNA + H(+). Its function is as follows. Component of the small ribosomal subunit. The ribosome is a large ribonucleoprotein complex responsible for the synthesis of proteins in the cell. Has endonuclease activity and plays a role in repair of damaged DNA. Also involved in other processes including regulation of transcription, translation of its cognate mRNA, spindle formation and chromosome movement during mitosis, and apoptosis. This Ambystoma mexicanum (Axolotl) protein is Small ribosomal subunit protein uS3 (RPS3).